We begin with the raw amino-acid sequence, 290 residues long: ATP synthase gamma chain (290 aa).

The protein belongs to the ATPase gamma chain family. As to quaternary structure, F-type ATPases have 2 components, CF(1) - the catalytic core - and CF(0) - the membrane proton channel. CF(1) has five subunits: alpha(3), beta(3), gamma(1), delta(1), epsilon(1). CF(0) has three main subunits: a, b and c.

Its subcellular location is the cell membrane. Produces ATP from ADP in the presence of a proton gradient across the membrane. The gamma chain is believed to be important in regulating ATPase activity and the flow of protons through the CF(0) complex. This is ATP synthase gamma chain from Chloroflexus aurantiacus (strain ATCC 29366 / DSM 635 / J-10-fl).